The chain runs to 1071 residues: Exportin-1 (1071 aa).

In terms of domain architecture, Importin N-terminal spans 46-112 (AQEVLTHLKE…KKYVVGLIIK (67 aa)). HEAT repeat units lie at residues 217–240 (QNAP…PLGY), 241–277 (IFET…VSVS), 354–472 (MLLV…YVDT), 515–553 (RFLV…QYPR), 560–597 (KFLK…KCRR), and 602–639 (VQVG…AVGY). The necessary for interaction with Ran and nuclear export complex formation stretch occupies residues 327-450 (CTFLKEHGQL…VREFMKDTDS (124 aa)). The residue at position 391 (Ser-391) is a Phosphoserine. The segment at 411–481 (TVLSKVRLLM…TEIIMTKKLQ (71 aa)) is necessary for interaction with RANBP3. Lys-446 is modified (N6-acetyllysine). Position 448 is a phosphothreonine (Thr-448). Ser-450 carries the post-translational modification Phosphoserine. Tyr-454 carries the post-translational modification Phosphotyrosine. N6-acetyllysine is present on Lys-693. 4 HEAT repeats span residues 775-813 (NFVP…KLGG), 885-916 (TMRN…SFYQ), 917-954 (TYFC…NLVE), and 1002-1039 (FSLN…EERE). Ser-1031 is subject to Phosphoserine.

This sequence belongs to the exportin family. Found in a U snRNA export complex with PHAX/RNUXA, NCBP1/CBP80, NCBP2/CBP20, RAN, XPO1 and m7G-capped RNA. Component of a nuclear export receptor complex composed of KPNB1, RAN, SNUPN and XPO1. Found in a trimeric export complex with SNUPN, RAN and XPO1. Found in a nuclear export complex with RANBP3 and RAN. Found in a 60S ribosomal subunit export complex with NMD3, RAN, XPO1. Interacts with DDX3X, NMD3, NUP42, NUP88, NUP214, RANBP3 and TERT. Interacts with NEMF (via its N-terminus). Interacts with the monomeric form of BIRC5/survivin deacetylated at 'Lys-129'. Interacts with SERTAD2; the interaction translocates SERTAD2 out of the nucleus. Interacts with ATF2. Interacts with SLC35G1 and STIM1. Interacts with DCAF8. Interacts with DTNBP1 and the interaction translocates DTNBP1 out of the nucleus. Interacts with CPEB3. Interacts with HAX1. Interacts with BOK; translocates to the cytoplasm. Interacts with HSP90AB1. Interacts with LRPPRC; interacts with LRPPRC alone and also when LRPPRC is in complex with EIF4E and with EIF4E sensitivity element (4ESE)-containing mRNAs to form an EIF4E-dependent mRNA export complex.

The protein localises to the cytoplasm. It is found in the nucleus. Its subcellular location is the nucleoplasm. The protein resides in the cajal body. It localises to the nucleolus. Mediates the nuclear export of cellular proteins (cargos) bearing a leucine-rich nuclear export signal (NES) and of RNAs. In the nucleus, in association with RANBP3, binds cooperatively to the NES on its target protein and to the GTPase Ran in its active GTP-bound form. Docking of this complex to the nuclear pore complex (NPC) is mediated through binding to nucleoporins. Upon transit of a nuclear export complex into the cytoplasm, disassembling of the complex and hydrolysis of Ran-GTP to Ran-GDP (induced by RANBP1 and RANGAP1, respectively) cause release of the cargo from the export receptor. The directionality of nuclear export is thought to be conferred by an asymmetric distribution of the GTP- and GDP-bound forms of Ran between the cytoplasm and nucleus. Involved in U3 snoRNA transport from Cajal bodies to nucleoli. Binds to late precursor U3 snoRNA bearing a TMG cap. This is Exportin-1 (Xpo1) from Mus musculus (Mouse).